Here is a 356-residue protein sequence, read N- to C-terminus: Tyrosine recombinase XerS (356 aa).

In terms of domain architecture, Core-binding (CB) spans 16–121 (IMPWYVLDYY…ALSSLYKYLT (106 aa)). The Tyr recombinase domain maps to 169 to 354 (AFLDYVDKEY…VNDEQKNALD (186 aa)). Residues Arg-210, Lys-234, His-306, Arg-309, and His-332 contribute to the active site. Catalysis depends on Tyr-341, which acts as the O-(3'-phospho-DNA)-tyrosine intermediate.

Belongs to the 'phage' integrase family. XerS subfamily.

The protein resides in the cytoplasm. Its activity is regulated as follows. FtsK is required for recombination. Its function is as follows. Site-specific tyrosine recombinase, which acts by catalyzing the cutting and rejoining of the recombining DNA molecules. Essential to convert dimers of the bacterial chromosome into monomers to permit their segregation at cell division. This is Tyrosine recombinase XerS from Streptococcus pyogenes serotype M49 (strain NZ131).